We begin with the raw amino-acid sequence, 414 residues long: Leucine-rich repeat protein 1 (414 aa).

LRR repeat units lie at residues 155 to 176 (SLEHLQTSYCGLVRVDMRMLCL), 178 to 199 (SLRKLDLSHNHIKKLPATIGDL), 201 to 222 (HLQELNLNDNHLESFSVALCHS), 227 to 248 (SLRSLDLSKNKIKALPVQFCQL), 250 to 271 (ELKNLKLDDNELIQFPCKIGQL), 273 to 294 (NLRFLSAARNKLPFLPSEFRNL), and 295 to 316 (SLEYLDLFGNTFEQPKVLPVIK).

As to quaternary structure, component of the probable ECS(LRR1) E3 ubiquitin-protein ligase complex which contains CUL2, RBX1, Elongin BC complex and LRR1. Interacts with CUL2, RBX1, ELOB and ELOC. Ubiquitous. Maximal expression was seen in the heart and skeletal muscle and minimal expression seen in the kidney.

The protein localises to the nucleus. The protein operates within protein modification; protein ubiquitination. Substrate recognition subunit of an ECS (Elongin BC-CUL2/5-SOCS-box protein) E3 ubiquitin-protein ligase complex which mediates the ubiquitination and subsequent proteasomal degradation of target proteins. ECS(LRR1) ubiquitinates MCM7 and promotes CMG replisome disassembly by VCP and chromatin extraction during S-phase. May negatively regulate the 4-1BB-mediated signaling cascades which result in the activation of NK-kappaB and JNK1. This is Leucine-rich repeat protein 1 from Homo sapiens (Human).